The chain runs to 236 residues: Uridylate kinase (236 aa).

Position 9–12 (9–12 (KFSG)) interacts with ATP. The segment at 17-22 (GNSGFG) is involved in allosteric activation by GTP. Gly51 lines the UMP pocket. ATP-binding residues include Gly52 and Arg56. UMP is bound by residues Asp72 and 133-140 (TGNPFFTT). The ATP site is built by Thr160, Tyr166, and Asp169.

Belongs to the UMP kinase family. In terms of assembly, homohexamer.

It is found in the cytoplasm. It catalyses the reaction UMP + ATP = UDP + ADP. It participates in pyrimidine metabolism; CTP biosynthesis via de novo pathway; UDP from UMP (UMPK route): step 1/1. Its activity is regulated as follows. Allosterically activated by GTP. Inhibited by UTP. Functionally, catalyzes the reversible phosphorylation of UMP to UDP. In Helicobacter hepaticus (strain ATCC 51449 / 3B1), this protein is Uridylate kinase.